We begin with the raw amino-acid sequence, 293 residues long: Undecaprenyl-diphosphatase (293 aa).

Transmembrane regions (helical) follow at residues 3–23 (IALA…EFLP), 43–63 (KGKI…CWEF), 85–105 (ANVV…GKWI), 109–129 (LFNP…ILLA), 178–198 (FALV…MLFG), 203–223 (VATE…TVYE), 238–258 (IFAV…RWLL), and 269–289 (FAWY…SGLV).

Belongs to the UppP family.

Its subcellular location is the cell inner membrane. The enzyme catalyses di-trans,octa-cis-undecaprenyl diphosphate + H2O = di-trans,octa-cis-undecaprenyl phosphate + phosphate + H(+). Its function is as follows. Catalyzes the dephosphorylation of undecaprenyl diphosphate (UPP). Confers resistance to bacitracin. The sequence is that of Undecaprenyl-diphosphatase from Cupriavidus necator (strain ATCC 17699 / DSM 428 / KCTC 22496 / NCIMB 10442 / H16 / Stanier 337) (Ralstonia eutropha).